The sequence spans 344 residues: GTP 3',8-cyclase (344 aa).

The Radical SAM core domain occupies 19–239 (PFGRTIDYLR…ANYTLTDLPD (221 aa)). Position 28 (Arg-28) interacts with GTP. The [4Fe-4S] cluster site is built by Cys-35 and Cys-39. Residue Tyr-41 participates in S-adenosyl-L-methionine binding. A [4Fe-4S] cluster-binding site is contributed by Cys-42. Arg-77 contributes to the GTP binding site. Position 81 (Gly-81) interacts with S-adenosyl-L-methionine. Thr-111 contacts GTP. Position 135 (Ser-135) interacts with S-adenosyl-L-methionine. Lys-171 contacts GTP. S-adenosyl-L-methionine is bound at residue Met-205. Residues Cys-268 and Cys-271 each contribute to the [4Fe-4S] cluster site. 273-275 (RVR) is a GTP binding site. Cys-285 is a binding site for [4Fe-4S] cluster.

It belongs to the radical SAM superfamily. MoaA family. In terms of assembly, monomer and homodimer. It depends on [4Fe-4S] cluster as a cofactor.

It carries out the reaction GTP + AH2 + S-adenosyl-L-methionine = (8S)-3',8-cyclo-7,8-dihydroguanosine 5'-triphosphate + 5'-deoxyadenosine + L-methionine + A + H(+). Its pathway is cofactor biosynthesis; molybdopterin biosynthesis. Catalyzes the cyclization of GTP to (8S)-3',8-cyclo-7,8-dihydroguanosine 5'-triphosphate. The polypeptide is GTP 3',8-cyclase (Rhodopseudomonas palustris (strain TIE-1)).